Reading from the N-terminus, the 269-residue chain is Hydroxyethylthiazole kinase (269 aa).

M46 provides a ligand contact to substrate. ATP-binding residues include R122 and T168. G195 is a binding site for substrate.

Belongs to the Thz kinase family. It depends on Mg(2+) as a cofactor.

The enzyme catalyses 5-(2-hydroxyethyl)-4-methylthiazole + ATP = 4-methyl-5-(2-phosphooxyethyl)-thiazole + ADP + H(+). Its pathway is cofactor biosynthesis; thiamine diphosphate biosynthesis; 4-methyl-5-(2-phosphoethyl)-thiazole from 5-(2-hydroxyethyl)-4-methylthiazole: step 1/1. Functionally, catalyzes the phosphorylation of the hydroxyl group of 4-methyl-5-beta-hydroxyethylthiazole (THZ). In Geobacillus thermodenitrificans (strain NG80-2), this protein is Hydroxyethylthiazole kinase.